The sequence spans 160 residues: SsrA-binding protein (160 aa).

A disordered region spans residues 132-160 (KIHDKRDDMQKKDAQQEIARALKSSNRYE). The span at 135–146 (DKRDDMQKKDAQ) shows a compositional bias: basic and acidic residues.

The protein belongs to the SmpB family.

It is found in the cytoplasm. In terms of biological role, required for rescue of stalled ribosomes mediated by trans-translation. Binds to transfer-messenger RNA (tmRNA), required for stable association of tmRNA with ribosomes. tmRNA and SmpB together mimic tRNA shape, replacing the anticodon stem-loop with SmpB. tmRNA is encoded by the ssrA gene; the 2 termini fold to resemble tRNA(Ala) and it encodes a 'tag peptide', a short internal open reading frame. During trans-translation Ala-aminoacylated tmRNA acts like a tRNA, entering the A-site of stalled ribosomes, displacing the stalled mRNA. The ribosome then switches to translate the ORF on the tmRNA; the nascent peptide is terminated with the 'tag peptide' encoded by the tmRNA and targeted for degradation. The ribosome is freed to recommence translation, which seems to be the essential function of trans-translation. The protein is SsrA-binding protein of Leptospira borgpetersenii serovar Hardjo-bovis (strain JB197).